Reading from the N-terminus, the 112-residue chain is Large ribosomal subunit protein eL30 (112 aa).

The protein belongs to the eukaryotic ribosomal protein eL30 family.

In Lupinus luteus (European yellow lupine), this protein is Large ribosomal subunit protein eL30 (RPL30).